A 293-amino-acid chain; its full sequence is N(1)-aminopropylagmatine ureohydrolase (293 aa).

Mn(2+) contacts are provided by His105, Asp128, His130, Asp132, Asp210, and Asp212.

Belongs to the arginase family. It depends on Mn(2+) as a cofactor.

The protein localises to the cytoplasm. The enzyme catalyses N(1)-(3-aminopropyl)agmatine + H2O = urea + spermidine. It functions in the pathway amine and polyamine biosynthesis; spermidine biosynthesis. In terms of biological role, involved in the biosynthesis of polyamines which are thought to support the growth of thermophilic microorganisms under high-temperature conditions. It seems that long-chain and branched-chain of polyamines effectively stabilize DNA and RNA, respectively. Catalyzes the decarboxylation of N1-(3-aminopropyl)agmatine to yield spermidine and urea. It cannot use agmatine as substrate. The sequence is that of N(1)-aminopropylagmatine ureohydrolase from Thermus thermophilus (strain ATCC 27634 / DSM 579 / HB8).